A 1025-amino-acid chain; its full sequence is Exportin-T (1025 aa).

The protein belongs to the exportin family.

It is found in the nucleus. Its subcellular location is the cytoplasm. TRNA nucleus export receptor which facilitates tRNA translocation across the nuclear pore complex. Involved in pre-tRNA splicing, probably by affecting the interaction of pre-tRNA with splicing endonuclease. This Candida albicans (strain SC5314 / ATCC MYA-2876) (Yeast) protein is Exportin-T (LOS1).